We begin with the raw amino-acid sequence, 245 residues long: 5-oxoprolinase subunit A (245 aa).

Belongs to the LamB/PxpA family. Forms a complex composed of PxpA, PxpB and PxpC.

It carries out the reaction 5-oxo-L-proline + ATP + 2 H2O = L-glutamate + ADP + phosphate + H(+). Its function is as follows. Catalyzes the cleavage of 5-oxoproline to form L-glutamate coupled to the hydrolysis of ATP to ADP and inorganic phosphate. The protein is 5-oxoprolinase subunit A of Chromobacterium violaceum (strain ATCC 12472 / DSM 30191 / JCM 1249 / CCUG 213 / NBRC 12614 / NCIMB 9131 / NCTC 9757 / MK).